Here is a 200-residue protein sequence, read N- to C-terminus: Elongation factor Ts (200 aa).

Residues 83 to 86 (TDFA) are involved in Mg(2+) ion dislocation from EF-Tu.

This sequence belongs to the EF-Ts family.

It localises to the cytoplasm. In terms of biological role, associates with the EF-Tu.GDP complex and induces the exchange of GDP to GTP. It remains bound to the aminoacyl-tRNA.EF-Tu.GTP complex up to the GTP hydrolysis stage on the ribosome. The sequence is that of Elongation factor Ts from Syntrophobacter fumaroxidans (strain DSM 10017 / MPOB).